A 278-amino-acid polypeptide reads, in one-letter code: Rhomboid protease GlpG (278 aa).

Helical transmembrane passes span 95 to 115 (GPLTLGVMALCIVVYILMQIL), 143 to 163 (AFLHFSLLHITFNLLWWWYLG), 170 to 190 (LGSGKLFVLAVVSAFFSGWAQ), 192 to 212 (LFSGALFGGLSGVVYALMGYC), 224 to 241 (LMLPRGLMVFSVLWLVAG), and 245 to 267 (ILGMSIANAAHVAGLVLGLLMAF). S202 serves as the catalytic Nucleophile. H255 is a catalytic residue.

The protein belongs to the peptidase S54 family.

Its subcellular location is the cell inner membrane. The catalysed reaction is Cleaves type-1 transmembrane domains using a catalytic dyad composed of serine and histidine that are contributed by different transmembrane domains.. Its function is as follows. Rhomboid-type serine protease that catalyzes intramembrane proteolysis. The sequence is that of Rhomboid protease GlpG from Serratia proteamaculans (strain 568).